A 706-amino-acid chain; its full sequence is Translation initiation factor IF-2 (706 aa).

Positions 55–117 (KEVNSDSNQE…PTMKDEKGLI (63 aa)) are disordered. Positions 67–81 (VNTDDKLDKIDKPNK) are enriched in basic and acidic residues. A compositionally biased stretch (basic residues) spans 93 to 108 (KNKKSKKKQKNKKKGP). Residues 208 to 375 (SRPPVVTVMG…MILLVSEVEE (168 aa)) form the tr-type G domain. A G1 region spans residues 217–224 (GHVDHGKT). Residue 217–224 (GHVDHGKT) coordinates GTP. A G2 region spans residues 242-246 (GITQH). Residues 263-266 (DTPG) are G3. GTP contacts are provided by residues 263 to 267 (DTPGH) and 317 to 320 (NKID). The G4 stretch occupies residues 317–320 (NKID). Residues 353 to 355 (SAI) form a G5 region.

Belongs to the TRAFAC class translation factor GTPase superfamily. Classic translation factor GTPase family. IF-2 subfamily.

It is found in the cytoplasm. Its function is as follows. One of the essential components for the initiation of protein synthesis. Protects formylmethionyl-tRNA from spontaneous hydrolysis and promotes its binding to the 30S ribosomal subunits. Also involved in the hydrolysis of GTP during the formation of the 70S ribosomal complex. The polypeptide is Translation initiation factor IF-2 (Alkaliphilus metalliredigens (strain QYMF)).